A 167-amino-acid polypeptide reads, in one-letter code: Methyl-coenzyme M reductase II operon protein D (167 aa).

As to quaternary structure, MCR is composed of three subunits: alpha, beta, and gamma. The function of protein D is not known.

This Methanocaldococcus jannaschii (strain ATCC 43067 / DSM 2661 / JAL-1 / JCM 10045 / NBRC 100440) (Methanococcus jannaschii) protein is Methyl-coenzyme M reductase II operon protein D (mrtD).